A 435-amino-acid chain; its full sequence is Adenylosuccinate synthetase (435 aa).

GTP is bound by residues 17–23 and 45–47; these read GDEGKGK and GHT. The active-site Proton acceptor is D18. D18 and G45 together coordinate Mg(2+). IMP is bound by residues 18-21, 43-46, T134, R148, Q229, T244, and R308; these read DEGK and NAGH. Residue H46 is the Proton donor of the active site. Residue 304–310 participates in substrate binding; the sequence is SVTGRPR. Residues R310, 336-338, and 418-420 each bind GTP; these read KLD and STG.

Belongs to the adenylosuccinate synthetase family. In terms of assembly, homodimer. Mg(2+) serves as cofactor.

It localises to the cytoplasm. It carries out the reaction IMP + L-aspartate + GTP = N(6)-(1,2-dicarboxyethyl)-AMP + GDP + phosphate + 2 H(+). The protein operates within purine metabolism; AMP biosynthesis via de novo pathway; AMP from IMP: step 1/2. Functionally, plays an important role in the de novo pathway of purine nucleotide biosynthesis. Catalyzes the first committed step in the biosynthesis of AMP from IMP. In Bordetella pertussis (strain Tohama I / ATCC BAA-589 / NCTC 13251), this protein is Adenylosuccinate synthetase.